A 72-amino-acid chain; its full sequence is Translation initiation factor IF-1 (72 aa).

The 72-residue stretch at 1-72 (MAKEDCIEMQ…SKARIIFRAR (72 aa)) folds into the S1-like domain.

It belongs to the IF-1 family. As to quaternary structure, component of the 30S ribosomal translation pre-initiation complex which assembles on the 30S ribosome in the order IF-2 and IF-3, IF-1 and N-formylmethionyl-tRNA(fMet); mRNA recruitment can occur at any time during PIC assembly.

The protein resides in the cytoplasm. In terms of biological role, one of the essential components for the initiation of protein synthesis. Stabilizes the binding of IF-2 and IF-3 on the 30S subunit to which N-formylmethionyl-tRNA(fMet) subsequently binds. Helps modulate mRNA selection, yielding the 30S pre-initiation complex (PIC). Upon addition of the 50S ribosomal subunit IF-1, IF-2 and IF-3 are released leaving the mature 70S translation initiation complex. The polypeptide is Translation initiation factor IF-1 (Haemophilus ducreyi (strain 35000HP / ATCC 700724)).